The sequence spans 122 residues: Holo-[acyl-carrier-protein] synthase (122 aa).

Residues Asp-8 and Glu-60 each contribute to the Mg(2+) site.

This sequence belongs to the P-Pant transferase superfamily. AcpS family. It depends on Mg(2+) as a cofactor.

Its subcellular location is the cytoplasm. The enzyme catalyses apo-[ACP] + CoA = holo-[ACP] + adenosine 3',5'-bisphosphate + H(+). Its function is as follows. Transfers the 4'-phosphopantetheine moiety from coenzyme A to a Ser of acyl-carrier-protein. In Anaplasma phagocytophilum (strain HZ), this protein is Holo-[acyl-carrier-protein] synthase.